We begin with the raw amino-acid sequence, 678 residues long: Alpha-L-arabinofuranosidase 1 (678 aa).

The first 33 residues, 1-33 (MDMESWKLLRSVCVLSFLLGSCFVYQSLRVVDA), serve as a signal peptide directing secretion. One can recognise a CBM-cenC domain in the interval 152–239 (NIEEGKKYKV…WIDQVSAMPV (88 aa)). Residues Asn181, Asn362, Asn523, and Asn555 are each glycosylated (N-linked (GlcNAc...) asparagine).

It belongs to the glycosyl hydrolase 51 family. In terms of tissue distribution, expressed in roots, leaves, flowers, stems, siliques and seedlings. Observed in zones of cell proliferation, the vascular system and floral abscission zones. Expressed in the guard cells in stems, in xylem vessels and parenchyma cells surrounding the vessels, in the cambium and in the phloem, but not in the secondary xylem.

It localises to the secreted. The protein resides in the extracellular space. The protein localises to the extracellular matrix. It catalyses the reaction Hydrolysis of terminal non-reducing alpha-L-arabinofuranoside residues in alpha-L-arabinosides.. In terms of biological role, may be involved in the coordinated dissolution of the cell wall matrix during abscission and in the secondary cell wall formation in xylem vessels. Prefers arabinoxylan, but may also use pectic arabinans as substrates. In Arabidopsis thaliana (Mouse-ear cress), this protein is Alpha-L-arabinofuranosidase 1 (ASD1).